Consider the following 732-residue polypeptide: Aldehyde oxidoreductase molybdenum-binding subunit PaoC (732 aa).

Residues glycine 241–phenylalanine 242, isoleucine 468–threonine 470, glycine 511–alanine 512, arginine 615–threonine 621, glutamine 625, and lysine 688–glycine 691 each bind Mo-molybdopterin cytosine dinucleotide. The active-site Proton acceptor is the glutamate 692.

It belongs to the xanthine dehydrogenase family. Heterotrimer composed of PaoA, PaoB and PaoC. Mo-molybdopterin cytosine dinucleotide serves as cofactor.

It is found in the periplasm. The catalysed reaction is an aldehyde + A + H2O = a carboxylate + AH2 + H(+). Functionally, oxidizes aldehydes to the corresponding carboxylic acids with a preference for aromatic aldehydes. It might play a role in the detoxification of aldehydes to avoid cell damage. The polypeptide is Aldehyde oxidoreductase molybdenum-binding subunit PaoC (Escherichia coli O157:H7).